A 38-amino-acid chain; its full sequence is Photosystem II reaction center protein L (38 aa).

The helical transmembrane segment at 17 to 37 (SLYWGLLLIFVLAVLFSSYIF) threads the bilayer.

It belongs to the PsbL family. In terms of assembly, PSII is composed of 1 copy each of membrane proteins PsbA, PsbB, PsbC, PsbD, PsbE, PsbF, PsbH, PsbI, PsbJ, PsbK, PsbL, PsbM, PsbT, PsbX, PsbY, PsbZ, Psb30/Ycf12, at least 3 peripheral proteins of the oxygen-evolving complex and a large number of cofactors. It forms dimeric complexes.

It localises to the plastid. It is found in the chloroplast thylakoid membrane. Its function is as follows. One of the components of the core complex of photosystem II (PSII). PSII is a light-driven water:plastoquinone oxidoreductase that uses light energy to abstract electrons from H(2)O, generating O(2) and a proton gradient subsequently used for ATP formation. It consists of a core antenna complex that captures photons, and an electron transfer chain that converts photonic excitation into a charge separation. This subunit is found at the monomer-monomer interface and is required for correct PSII assembly and/or dimerization. The chain is Photosystem II reaction center protein L from Tetradesmus obliquus (Green alga).